Consider the following 141-residue polypeptide: Large ribosomal subunit protein uL11 (141 aa).

Belongs to the universal ribosomal protein uL11 family. As to quaternary structure, part of the ribosomal stalk of the 50S ribosomal subunit. Interacts with L10 and the large rRNA to form the base of the stalk. L10 forms an elongated spine to which L12 dimers bind in a sequential fashion forming a multimeric L10(L12)X complex. In terms of processing, one or more lysine residues are methylated.

Forms part of the ribosomal stalk which helps the ribosome interact with GTP-bound translation factors. The polypeptide is Large ribosomal subunit protein uL11 (Sulfurimonas denitrificans (strain ATCC 33889 / DSM 1251) (Thiomicrospira denitrificans (strain ATCC 33889 / DSM 1251))).